A 223-amino-acid polypeptide reads, in one-letter code: Ubiquitin carboxyl-terminal hydrolase isozyme L1 (223 aa).

Methionine 1 carries the N-acetylmethionine modification. One can recognise a UCH catalytic domain in the interval 2 to 221 (QLKPMEINPE…VRFSAVALCK (220 aa)). Residues 5-10 (PMEINP) are interaction with ubiquitin. Cysteine 90 serves as the catalytic Nucleophile. Residue serine 125 is modified to Phosphoserine. Histidine 161 functions as the Proton donor in the catalytic mechanism. An interaction with ubiquitin region spans residues 211 to 216 (EVRFSA). Cysteine 220 carries the S-farnesyl cysteine lipid modification. Positions 221–223 (KAA) are cleaved as a propeptide — removed in mature form.

Belongs to the peptidase C12 family. As to quaternary structure, monomer. Homodimer. Interacts with COPS5 and SNCA. In terms of processing, O-glycosylated. Expressed in brain, where it is found in neurons but not in oligodendrocytes or astrocytes. Found in the ganglion cell layer and the inner nuclear layer of the retina (at protein level). Expressed in brain and testis. In the brain, expression is at its lowest in replaceable neurons of hippocampus and olfactory bulb. Highly expressed in senescent pituitary. In skeletal muscle, primarily expressed in oxidative muscle fibers.

It is found in the cytoplasm. Its subcellular location is the endoplasmic reticulum membrane. It catalyses the reaction Thiol-dependent hydrolysis of ester, thioester, amide, peptide and isopeptide bonds formed by the C-terminal Gly of ubiquitin (a 76-residue protein attached to proteins as an intracellular targeting signal).. Deubiquitinase that plays a role in the regulation of several processes such as maintenance of synaptic function, cardiac function, inflammatory response or osteoclastogenesis. Abrogates the ubiquitination of multiple proteins including WWTR1/TAZ, EGFR, HIF1A and beta-site amyloid precursor protein cleaving enzyme 1/BACE1. In addition, recognizes and hydrolyzes a peptide bond at the C-terminal glycine of ubiquitin to maintain a stable pool of monoubiquitin that is a key requirement for the ubiquitin-proteasome and the autophagy-lysosome pathways. Regulates amyloid precursor protein/APP processing by promoting BACE1 degradation resulting in decreased amyloid beta production. Plays a role in the immune response by regulating the ability of MHC I molecules to reach cross-presentation compartments competent for generating Ag-MHC I complexes. Mediates the 'Lys-48'-linked deubiquitination of the transcriptional coactivator WWTR1/TAZ leading to its stabilization and inhibition of osteoclastogenesis. Deubiquitinates and stabilizes epidermal growth factor receptor EGFR to prevent its degradation and to activate its downstream mediators. Modulates oxidative activity in skeletal muscle by regulating key mitochondrial oxidative proteins. Enhances the activity of hypoxia-inducible factor 1-alpha/HIF1A by abrogateing its VHL E3 ligase-mediated ubiquitination and consequently inhibiting its degradation. This Mus musculus (Mouse) protein is Ubiquitin carboxyl-terminal hydrolase isozyme L1 (Uchl1).